A 329-amino-acid polypeptide reads, in one-letter code: Prostaglandin reductase 1 (329 aa).

Thr-18 bears the Phosphothreonine mark. Residue Ser-20 is modified to Phosphoserine. NADP(+)-binding positions include 152–155 (GAVG), Lys-178, Tyr-193, Asn-217, 239–245 (CGAISTY), 270–272 (FIV), and Asn-321. Position 178 is an N6-(2-hydroxyisobutyryl)lysine; alternate (Lys-178). An N6-acetyllysine; alternate modification is found at Lys-178.

Belongs to the NADP-dependent oxidoreductase L4BD family. Monomer or homodimer. As to expression, ubiquitously distributed in various tissues and leukocytes, the kidney and liver had the highest enzyme activities.

Its subcellular location is the cytoplasm. It catalyses the reaction 13,14-dihydro-15-oxo-prostaglandin E1 + NADP(+) = 15-oxoprostaglandin E1 + NADPH + H(+). The enzyme catalyses 13,14-dihydro-15-oxo-prostaglandin E2 + NADP(+) = 15-oxoprostaglandin E2 + NADPH + H(+). The catalysed reaction is 13,14-dihydro-15-oxo-prostaglandin E2 + NAD(+) = 15-oxoprostaglandin E2 + NADH + H(+). It carries out the reaction 13,14-dihydro-15-oxo-prostaglandin F1alpha + NADP(+) = 15-oxoprostaglandin F1alpha + NADPH + H(+). It catalyses the reaction 13,14-dihydro-15-oxo-PGF2alpha + NADP(+) = 15-oxoprostaglandin F2alpha + NADPH + H(+). The enzyme catalyses leukotriene B4 + NADP(+) = 12-oxo-leukotriene B4 + NADPH + H(+). The catalysed reaction is 20-hydroxy-leukotriene B4 + NADP(+) = 12-oxo-20-hydroxy-leukotriene B4 + NADPH + H(+). It carries out the reaction 6-trans-leukotriene B4 + NADP(+) = 12-oxo-(5S)-hydroxy-(6E,8E,10E,14Z)-eicosatetraenoate + NADPH + H(+). It catalyses the reaction (5S,12S)-dihydroxy-(6E,10E,12E,14Z)-eicosatetraenoate + NADP(+) = 12-oxo-(5S)-hydroxy-(6E,8E,10E,14Z)-eicosatetraenoate + NADPH + H(+). The enzyme catalyses 15-oxo-(5S,6R)-dihydroxy-(7E,9E,11Z,13E)-eicosatetraenoate + NADH + H(+) = 15-oxo-(5S,6R)-dihydroxy-(7E,9E,11Z)-eicosatrienoate + NAD(+). The catalysed reaction is an n-alkanal + NADP(+) = an alk-2-enal + NADPH + H(+). It carries out the reaction hexanal + NADP(+) = (E)-hex-2-enal + NADPH + H(+). It catalyses the reaction octanal + NADP(+) = (2E)-octenal + NADPH + H(+). The enzyme catalyses decanal + NADP(+) = (2E)-decenal + NADPH + H(+). The catalysed reaction is dodecanal + NADP(+) = (2E)-dodecenal + NADPH + H(+). It carries out the reaction 4-hydroxynonanal + NADP(+) = (E)-4-hydroxynon-2-enal + NADPH + H(+). It catalyses the reaction pentan-2-one + NADP(+) = (E)-pent-3-en-2-one + NADPH + H(+). The enzyme catalyses nonan-2-one + NADP(+) = (3E)-nonen-2-one + NADPH + H(+). Its activity is regulated as follows. Down-regulated by nonsteroidal anti-inflammatory drugs diclofenac, indomethacin and niflumic acid. NAD(P)H-dependent oxidoreductase involved in metabolic inactivation of pro- and anti-inflammatory eicosanoids: prostaglandins (PG), leukotrienes (LT) and lipoxins (LX). Preferentially uses NADPH over NADH as cofactor. Catalyzes with high efficiency the reduction of the 13,14 double bond of 15-oxoPGs, including 15-oxo-PGE1, 15-oxo-PGE2, 15-oxo-PGF1-alpha and 15-oxo-PGF2-alpha. Catalyzes with lower efficiency the oxidation of the hydroxyl group at C12 of LTB4 and its derivatives, converting them into biologically less active 12-oxo-LTB4 metabolites. Reduces 15-oxo-LXA4 to 13,14 dihydro-15-oxo-LXA4 and may promote neutrophil recruitment at the inflammatory site. Plays a role in metabolic detoxification of alkenals and ketones. Reduces alpha,beta-unsaturated alkenals and ketones, particularly those with medium-chain length, showing highest affinity toward (2E)-decenal and (3E)-3-nonen-2-one. May inactivate 4-hydroxy-2-nonenal, a cytotoxic lipid constituent of oxidized low-density lipoprotein particles. This is Prostaglandin reductase 1 (PTGR1) from Sus scrofa (Pig).